A 609-amino-acid polypeptide reads, in one-letter code: Chaperone protein DnaK (609 aa).

Phosphothreonine; by autocatalysis is present on T173. A disordered region spans residues 580–609; it reads QAAQGGGAEGQEPKKDNVVDADYEVVDDKK. Over residues 598-609 the composition is skewed to acidic residues; that stretch reads VDADYEVVDDKK.

This sequence belongs to the heat shock protein 70 family.

Its function is as follows. Acts as a chaperone. This is Chaperone protein DnaK from Brevibacillus brevis (strain 47 / JCM 6285 / NBRC 100599).